Here is a 425-residue protein sequence, read N- to C-terminus: Adenosine 3'-phospho 5'-phosphosulfate transporter 1 (425 aa).

A run of 9 helical transmembrane segments spans residues 27–47 (FLIL…IYYV), 102–122 (VIIL…AMGV), 147–167 (TQFL…MILA), 232–252 (YSWF…LFLL), 263–283 (ITYT…FDAF), 303–323 (MMFG…IEQG), 342–360 (VFLL…YSTI), 365–387 (PIVF…TIMY), and 391–411 (LTFL…VDIH).

Belongs to the nucleotide-sugar transporter family. SLC35B subfamily.

The protein resides in the golgi apparatus membrane. Its function is as follows. Mediates the transport of adenosine 3'-phospho 5'-phosphosulfate (PAPS), from cytosol into Golgi. PAPS is a universal sulfuryl donor for sulfation events that take place in the Golgi. In Caenorhabditis elegans, this protein is Adenosine 3'-phospho 5'-phosphosulfate transporter 1 (pst-1).